Consider the following 554-residue polypeptide: Glucose-6-phosphate isomerase (554 aa).

The active-site Proton donor is the glutamate 359. Catalysis depends on residues histidine 390 and lysine 518.

It belongs to the GPI family.

It localises to the cytoplasm. The enzyme catalyses alpha-D-glucose 6-phosphate = beta-D-fructose 6-phosphate. Its pathway is carbohydrate biosynthesis; gluconeogenesis. It participates in carbohydrate degradation; glycolysis; D-glyceraldehyde 3-phosphate and glycerone phosphate from D-glucose: step 2/4. In terms of biological role, catalyzes the reversible isomerization of glucose-6-phosphate to fructose-6-phosphate. In Pseudomonas syringae pv. tomato (strain ATCC BAA-871 / DC3000), this protein is Glucose-6-phosphate isomerase.